The following is a 174-amino-acid chain: Co-chaperone protein HscB homolog (174 aa).

Residues 2–74 enclose the J domain; the sequence is NYFELFSLLP…IQRAEHLLTL (73 aa).

The protein belongs to the HscB family. Interacts with HscA and stimulates its ATPase activity.

Its function is as follows. Co-chaperone involved in the maturation of iron-sulfur cluster-containing proteins. Seems to help targeting proteins to be folded toward HscA. The sequence is that of Co-chaperone protein HscB homolog from Shewanella halifaxensis (strain HAW-EB4).